A 159-amino-acid polypeptide reads, in one-letter code: Phosphopantetheine adenylyltransferase (159 aa).

Serine 9 provides a ligand contact to substrate. ATP is bound by residues 9 to 10 and histidine 17; that span reads SF. The substrate site is built by lysine 41, leucine 74, and lysine 88. ATP-binding positions include 89-91, glutamate 99, and 123-129; these read GLR and YGYISST.

This sequence belongs to the bacterial CoaD family. Homohexamer. The cofactor is Mg(2+).

Its subcellular location is the cytoplasm. The catalysed reaction is (R)-4'-phosphopantetheine + ATP + H(+) = 3'-dephospho-CoA + diphosphate. The protein operates within cofactor biosynthesis; coenzyme A biosynthesis; CoA from (R)-pantothenate: step 4/5. Functionally, reversibly transfers an adenylyl group from ATP to 4'-phosphopantetheine, yielding dephospho-CoA (dPCoA) and pyrophosphate. The protein is Phosphopantetheine adenylyltransferase of Corynebacterium diphtheriae (strain ATCC 700971 / NCTC 13129 / Biotype gravis).